Here is a 141-residue protein sequence, read N- to C-terminus: Hemoglobin subunit alpha (141 aa).

One can recognise a Globin domain in the interval 1-141 (VLSPADKTNV…VSTVLTSKYR (141 aa)). Ser-3 carries the phosphoserine modification. Residue Lys-7 is modified to N6-succinyllysine. Thr-8 bears the Phosphothreonine mark. Lys-11 carries the post-translational modification N6-succinyllysine. Ser-35 is modified (phosphoserine). Position 40 is an N6-succinyllysine (Lys-40). Position 49 is a phosphoserine (Ser-49). His-58 provides a ligand contact to O2. A heme b-binding site is contributed by His-87. The residue at position 102 (Ser-102) is a Phosphoserine. Thr-108 is subject to Phosphothreonine. Position 124 is a phosphoserine (Ser-124). A phosphothreonine mark is found at Thr-134 and Thr-137. Residue Ser-138 is modified to Phosphoserine.

The protein belongs to the globin family. As to quaternary structure, heterotetramer of two alpha chains and two beta chains. As to expression, red blood cells.

Its function is as follows. Involved in oxygen transport from the lung to the various peripheral tissues. Functionally, hemopressin acts as an antagonist peptide of the cannabinoid receptor CNR1. Hemopressin-binding efficiently blocks cannabinoid receptor CNR1 and subsequent signaling. In Eulemur fulvus fulvus (Brown lemur), this protein is Hemoglobin subunit alpha (HBA).